The chain runs to 208 residues: MTLQTFKSTDFEVFTVDGLEERMSAIKTNIHPKLEALGEQFAAYLSKQTDENFFYHVAKHARRKVNPPNDTWVAFSTNKRGYKMLPHFQIGLWGTHAFIYFGLIYECPQKVETAHAFLEHINDLKTNIPNDFVWSIDHTKPSVKLHKTLETNDLQKMIERLATVKKAELLVGIHISPEEFSAMTNEQFLAKIESTMQSLLPLYALCNR.

The protein belongs to the UPF0637 family.

The protein is UPF0637 protein BCQ_3749 of Bacillus cereus (strain Q1).